The sequence spans 327 residues: MATMASTSNCSPVATSPLMMLLFKALQEGGDSEDEARRRREQLNRRPSYRMILKDLETADKVMKKEPEETPPSSVDASPLQFQSVMRPPPTAPPTSAATPNRILPSSNAASPYGSPLGSSILSNQPLVLPFAPINGDFDFSAAIAAASQPKVFPGGPQQNGLGGGGGGGGVPGPSSGIAGMSVQPPTSSTPSQQQSVQSLEGTSGLIGSAMKPMLGIDAVSFPEFGTTDWQSPMLSGGYSSSPSPTMTGGSMRMGGGPLHGEDESNRKRQVRLLKNREAAKECRRKKKEYVKCLENRVSVLENQNKALIEELKTLKELYCRKEKDGM.

Residues 16–75 (SPLMMLLFKALQEGGDSEDEARRRREQLNRRPSYRMILKDLETADKVMKKEPEETPPSSV) form the KID domain. Disordered regions lie at residues 27 to 114 (QEGG…SPYG) and 151 to 200 (KVFP…VQSL). Residues 35–44 (EARRRREQLN) show a composition bias toward basic and acidic residues. S48 is subject to Phosphoserine. Residues 52–68 (ILKDLETADKVMKKEPE) are compositionally biased toward basic and acidic residues. Positions 71–84 (PPSSVDASPLQFQS) are enriched in polar residues. Over residues 161–172 (GLGGGGGGGGVP) the composition is skewed to gly residues. Residues 173-199 (GPSSGIAGMSVQPPTSSTPSQQQSVQS) are compositionally biased toward low complexity. The 52-residue stretch at 266 to 317 (NRKRQVRLLKNREAAKECRRKKKEYVKCLENRVSVLENQNKALIEELKTLKE) folds into the bZIP domain. A basic motif region spans residues 267 to 292 (RKRQVRLLKNREAAKECRRKKKEYVK). Residues 284 to 318 (RRKKKEYVKCLENRVSVLENQNKALIEELKTLKEL) adopt a coiled-coil conformation. A leucine-zipper region spans residues 294–315 (LENRVSVLENQNKALIEELKTL).

This sequence belongs to the bZIP family. In terms of assembly, interacts with CREB-regulated transcription coactivator homolog crtc-1. In terms of processing, transcriptional activity is enhanced by phosphorylation. Phosphorylated by cmk-1. Expressed widely, including in head neurons AFD, gustatory neurons ASE, the olfactory neurons AWC, and in the ASI sensory neurons, as well as in the intestine and gonads in hermaphrodites.

It is found in the nucleus. Its function is as follows. Transcription factor. Transcriptional activity probably positively regulated by phosphorylation. Modulates expression of target genes, acting by binding to regulatory cAMP response elements (CRE). Acts downstream of the calcium-triggered CaMKK-CaMK1 signaling cascade, consisting of the protein kinase kinase ckk-1 and the protein kinase cmk-1. Plays a role in learning and memory, feeding behavior, stress response, entry into the dauer stage and modulation of lifespan. Involved in commitment to the developmentally arrested larval state known as dauer, acting by positively regulating the expression of dauer-inhibiting TGF-beta-like daf-7 in the ASI neurons. Plays a role in both associative and non-associative long-term memory (LTM). Involved in modulating feeding behavior, acting by regulating transcription of tryptophan hydroxylase tph-1 in serotonergic ADF neurons. Regulates transcription of genes involved in endoplasmic reticulum (ER) stress. Involved in modulation of lifespan, in response to raised temperature, but independently of the heat-shock response pathway, acting by regulating transcription of FMRFamide-like neuropeptides flp-6 in the AFD neuron. Plays a role in associative long-term memory (LTM) and learning. Functionally, plays a role in associative long-term memory (LTM) and learning; perhaps required at the time of acquisition and/or the consolidation phase of memory formation. The polypeptide is CREB homolog crh-1 (Caenorhabditis elegans).